Here is a 415-residue protein sequence, read N- to C-terminus: L-cysteine:1D-myo-inositol 2-amino-2-deoxy-alpha-D-glucopyranoside ligase 2 (415 aa).

Cysteine 44 provides a ligand contact to Zn(2+). Residues 44-47, threonine 59, and 82-84 contribute to the L-cysteinyl-5'-AMP site; these read CGIT and NIT. Residues 46-56 carry the 'HIGH' region motif; the sequence is ITPYDSTHLGH. The 'ERGGDP' region motif lies at 188-193; it reads ERGGDP. An L-cysteinyl-5'-AMP-binding site is contributed by tryptophan 228. Zn(2+) is bound at residue cysteine 232. L-cysteinyl-5'-AMP is bound at residue 250–252; that stretch reads GSD. Histidine 257 contributes to the Zn(2+) binding site. Isoleucine 284 is an L-cysteinyl-5'-AMP binding site. The short motif at 290-294 is the 'KMSKS' region element; sequence KMSKS.

The protein belongs to the class-I aminoacyl-tRNA synthetase family. MshC subfamily. In terms of assembly, monomer. Zn(2+) serves as cofactor.

It catalyses the reaction 1D-myo-inositol 2-amino-2-deoxy-alpha-D-glucopyranoside + L-cysteine + ATP = 1D-myo-inositol 2-(L-cysteinylamino)-2-deoxy-alpha-D-glucopyranoside + AMP + diphosphate + H(+). Its function is as follows. Catalyzes the ATP-dependent condensation of GlcN-Ins and L-cysteine to form L-Cys-GlcN-Ins. This Corynebacterium jeikeium (strain K411) protein is L-cysteine:1D-myo-inositol 2-amino-2-deoxy-alpha-D-glucopyranoside ligase 2.